The chain runs to 173 residues: Shikimate kinase 2 (173 aa).

12–17 is a binding site for ATP; that stretch reads GCGKTT. The Mg(2+) site is built by Thr16 and Asp32. 3 residues coordinate substrate: Asp34, Arg58, and Gly79. The LID domain stretch occupies residues 112–126; sequence EENPQDNQRPTLTGR. Residue Arg120 coordinates ATP. Position 139 (Arg139) interacts with substrate. Position 155 (Gln155) interacts with ATP.

The protein belongs to the shikimate kinase family. AroL subfamily. Monomer. Requires Mg(2+) as cofactor.

Its subcellular location is the cytoplasm. It carries out the reaction shikimate + ATP = 3-phosphoshikimate + ADP + H(+). Its pathway is metabolic intermediate biosynthesis; chorismate biosynthesis; chorismate from D-erythrose 4-phosphate and phosphoenolpyruvate: step 5/7. Its function is as follows. Catalyzes the specific phosphorylation of the 3-hydroxyl group of shikimic acid using ATP as a cosubstrate. This Pectobacterium atrosepticum (strain SCRI 1043 / ATCC BAA-672) (Erwinia carotovora subsp. atroseptica) protein is Shikimate kinase 2.